The sequence spans 437 residues: Transcription factor AP-2-alpha (437 aa).

Residue lysine 10 forms a Glycyl lysine isopeptide (Lys-Gly) (interchain with G-Cter in SUMO); alternate linkage. A Glycyl lysine isopeptide (Lys-Gly) (interchain with G-Cter in SUMO2); alternate cross-link involves residue lysine 10. The interval cysteine 14–leucine 107 is disordered. The PPxY motif motif lies at tyrosine 57–tyrosine 62. 2 stretches are compositionally biased toward low complexity: residues isoleucine 65–serine 74 and glutamine 88–glutamine 101. Residues lysine 177 and lysine 184 each participate in a glycyl lysine isopeptide (Lys-Gly) (interchain with G-Cter in SUMO2) cross-link. Serine 239 carries the phosphoserine; by PKA modification. An H-S-H (helix-span-helix), dimerization region spans residues arginine 280–aspartate 410. A compositionally biased stretch (polar residues) spans leucine 414–lysine 427. Positions leucine 414–lysine 437 are disordered. The segment covering serine 428–lysine 437 has biased composition (basic and acidic residues).

The protein belongs to the AP-2 family. Binds DNA as a dimer. Can form homodimers or heterodimers with other AP-2 family members. Interacts with WWOX. Interacts with UBE2I. Interacts with RALBP1 in a complex also containing EPN1 and NUMB during interphase and mitosis. Interacts with CITED4. Interacts with KCTD1; this interaction represses transcription activation. Interacts (via C-terminus) with CITED2 (via C-terminus); the interaction stimulates TFAP2A-transcriptional activation. Interacts (via N-terminus) with EP300 (via N-terminus); the interaction requires CITED2. Interacts with KCTD15; this interaction inhibits TFAP2A transcriptional activation. Post-translationally, sumoylated on Lys-10; which inhibits transcriptional activity.

Its subcellular location is the nucleus. In terms of biological role, sequence-specific DNA-binding protein that interacts with inducible viral and cellular enhancer elements to regulate transcription of selected genes. AP-2 factors bind to the consensus sequence 5'-GCCNNNGGC-3' and activate genes involved in a large spectrum of important biological functions including proper eye, face, body wall, limb and neural tube development. They also suppress a number of genes including MCAM/MUC18, C/EBP alpha and MYC. AP-2-alpha is the only AP-2 protein required for early morphogenesis of the lens vesicle. Together with the CITED2 coactivator, stimulates the PITX2 P1 promoter transcription activation. Associates with chromatin to the PITX2 P1 promoter region. This chain is Transcription factor AP-2-alpha (Tfap2a), found in Mus musculus (Mouse).